A 260-amino-acid polypeptide reads, in one-letter code: Ribonuclease PH (260 aa).

Residues Arg-87 and 125–127 each bind phosphate; that span reads GTR. The interval 232–260 is disordered; that stretch reads LAAPPAAGPPAPERAGAGSGSGGKGTGSR. Positions 248–260 are enriched in gly residues; that stretch reads AGSGSGGKGTGSR.

This sequence belongs to the RNase PH family. Homohexameric ring arranged as a trimer of dimers.

The catalysed reaction is tRNA(n+1) + phosphate = tRNA(n) + a ribonucleoside 5'-diphosphate. Functionally, phosphorolytic 3'-5' exoribonuclease that plays an important role in tRNA 3'-end maturation. Removes nucleotide residues following the 3'-CCA terminus of tRNAs; can also add nucleotides to the ends of RNA molecules by using nucleoside diphosphates as substrates, but this may not be physiologically important. Probably plays a role in initiation of 16S rRNA degradation (leading to ribosome degradation) during starvation. The polypeptide is Ribonuclease PH (Parafrankia sp. (strain EAN1pec)).